Reading from the N-terminus, the 752-residue chain is Phosphatidylinositol 4-phosphate 5-kinase 1 (752 aa).

MORN repeat units lie at residues Tyr81 to Met103, Tyr104 to Thr126, Tyr127 to Thr149, Tyr150 to Phe172, Tyr173 to Gln195, Tyr196 to Arg218, and Tyr219 to Ser241. Positions Ser349–Phe748 constitute a PIPK domain. An activation loop region spans residues Tyr708–Ser729.

In terms of processing, phosphorylation inactivates the enzyme. Expressed in the whole plant, preferentially in roots. Strongly expressed in meristematic tissues, namely procambial cell layers.

It catalyses the reaction a 1,2-diacyl-sn-glycero-3-phospho-(1D-myo-inositol 4-phosphate) + ATP = a 1,2-diacyl-sn-glycero-3-phospho-(1D-myo-inositol-4,5-bisphosphate) + ADP + H(+). In terms of biological role, catalyzes the synthesis of phosphatidylinositol 4,5-bisphosphate and phosphatidylinositol 3,4-bisphosphate. This is Phosphatidylinositol 4-phosphate 5-kinase 1 (PIP5K1) from Arabidopsis thaliana (Mouse-ear cress).